Consider the following 180-residue polypeptide: uncharacterized protein (180 aa).

A disordered region spans residues Met1–Val93. Composition is skewed to low complexity over residues Ser9–Ser25 and Leu47–Gln64.

This is an uncharacterized protein from Homo sapiens (Human).